The primary structure comprises 461 residues: Photosystem II CP43 reaction center protein (461 aa).

A propeptide spanning residues 1–2 is cleaved from the precursor; the sequence is ME. T3 carries the N-acetylthreonine modification. At T3 the chain carries Phosphothreonine. Transmembrane regions (helical) follow at residues 57–81, 122–143, 166–188, 243–263, and 279–300; these read LFEV…PHLA, LIGP…KDKN, KAMY…RVIT, KPWA…LSYS, and WFNN…ASQS. E355 is a binding site for [CaMn4O5] cluster. Residues 435 to 459 form a helical membrane-spanning segment; sequence RARAAAAGFEKGIDRDNEPVLSMKP.

The protein belongs to the PsbB/PsbC family. PsbC subfamily. In terms of assembly, PSII is composed of 1 copy each of membrane proteins PsbA, PsbB, PsbC, PsbD, PsbE, PsbF, PsbH, PsbI, PsbJ, PsbK, PsbL, PsbM, PsbT, PsbX, PsbY, PsbZ, Psb30/Ycf12, at least 3 peripheral proteins of the oxygen-evolving complex and a large number of cofactors. It forms dimeric complexes. It depends on Binds multiple chlorophylls and provides some of the ligands for the Ca-4Mn-5O cluster of the oxygen-evolving complex. It may also provide a ligand for a Cl- that is required for oxygen evolution. PSII binds additional chlorophylls, carotenoids and specific lipids. as a cofactor.

The protein localises to the plastid. It localises to the chloroplast thylakoid membrane. Its function is as follows. One of the components of the core complex of photosystem II (PSII). It binds chlorophyll and helps catalyze the primary light-induced photochemical processes of PSII. PSII is a light-driven water:plastoquinone oxidoreductase, using light energy to abstract electrons from H(2)O, generating O(2) and a proton gradient subsequently used for ATP formation. The protein is Photosystem II CP43 reaction center protein of Tupiella akineta (Green alga).